We begin with the raw amino-acid sequence, 385 residues long: Phosphotransferase FrzJ (385 aa).

ATP is bound by residues N38 and K59. Residue D245 is part of the active site.

It belongs to the methylthioribose kinase family. Monomer.

The catalysed reaction is (1S,3S,6S,7S,8S,9S)-6-[(4-methoxyphenyl)methyl]-3-(methylamino)-5-azatricyclo[6.3.1.0(1,5)]dodecane-7,9-diol + ATP = (-)-FR901483 + ADP + 2 H(+). It participates in secondary metabolite biosynthesis. In terms of biological role, phosphotransferase; part of the gene cluster that mediates the biosynthesis of the alkaloid (-)-FR901483, a potent immunosuppressant that shows efficacy in animal models and a probable inhibitor of purine nucleotide biosynthesis by targeting phosphoribosylpyrophosphate amidotransferase (PPAT). FrzJ catalyzes the last step of the pathway by phosphorylating the C4'-OH of dephospho-(-)-FR901483 to produce (-)-FR901483. The biosynthesis of (-)-FR901483 starts with the condensation of two L-tyrosines to yield (S,S)-dityrosyl-piperazine. This process occurs in 3 steps with the non-canonical nonribosomal peptide synthetase FrzA catalyzing the reduction of L-tyrosine into L-tyrosinal, the spontaneous condensation of 2 L-tyrosinal units, and the subsequent reduction by the NmrA-like family domain-containing oxidoreductase FrzB. The cytochrome P450 monooxygenase FrzC then performs coupling between N10 and C1' to morph the piperazine into a 1,4-diazabicyclo[3.2.1]octane spiro-fused to a 2,5-cyclohexadienone. The dienone portion is further reduced to cyclohexanone by the flavin-dependent reductase FrzD. The methyltranserases (MTs) FrzE and FrzF are then involved in the methylation at the C10' amine and the C4 phenolic oxygen, respectively. The order of the two MTs appear to be interchangeable. Cleavage of the C9-N10' bond by the dioxygenase FrzG then leads to formation of a conjugated iminium. In addition to the oxidation of C9, an additional dehydrogenation between C7 and C8 can occur to give a likely shunt product. The next biosynthetic step is the intramolecular aldol condensation catalyzed by the newly identified aldolase FrzH to yield an aza-tricyclic product with the formation of a C9-C3' bond. The short-chain dehydrogenase/reductase FrzI then produces dephospho-(-)-FR901483 that is phosphorylated at C4'-OH into (-)-FR901483 by the phosphotransferase FrzJ. This chain is Phosphotransferase FrzJ, found in Cladobotryum sp.